Reading from the N-terminus, the 867-residue chain is 2-methylcitrate dehydratase (2-methyl-trans-aconitate forming) (867 aa).

[4Fe-4S] cluster is bound by residues C410, C476, and C479.

It belongs to the aconitase/IPM isomerase family. [4Fe-4S] cluster is required as a cofactor.

It catalyses the reaction (2S,3S)-2-methylcitrate = 2-methyl-trans-aconitate + H2O. The catalysed reaction is citrate = D-threo-isocitrate. The protein operates within organic acid metabolism; propanoate degradation. Inhibited by ferricyanide and EDTA. Involved in the catabolism of short chain fatty acids (SCFA) via the 2-methylcitrate cycle II (propionate degradation route). In vivo under anaerobic conditions, AcnD catalyzes the stereospecific dehydration of (2S,3S)-methylcitrate (2-MC) to yield the trans isomer of 2-methyl-aconitate (2-MCA). AcnD can also accept citrate and cis-aconitate, but with a lower efficiency. 2-methylisocitrate and isocitrate are not substrates. The protein is 2-methylcitrate dehydratase (2-methyl-trans-aconitate forming) (acnD) of Shewanella oneidensis (strain ATCC 700550 / JCM 31522 / CIP 106686 / LMG 19005 / NCIMB 14063 / MR-1).